A 326-amino-acid polypeptide reads, in one-letter code: Phospho-N-acetylmuramoyl-pentapeptide-transferase (326 aa).

The next 9 helical transmembrane spans lie at 3–23 (ISIS…PAFI), 51–71 (TMGG…FALF), 79–99 (VGMI…DDFL), 115–135 (LALQ…GGDI), 138–158 (VFGY…FWLV), 169–189 (GVDG…GVIA), 195–215 (MDIL…FIFN), 221–243 (VFMG…MALH), and 306–326 (FFFW…LYLM).

Belongs to the glycosyltransferase 4 family. MraY subfamily. Mg(2+) is required as a cofactor.

It is found in the cell membrane. It catalyses the reaction UDP-N-acetyl-alpha-D-muramoyl-L-alanyl-gamma-D-glutamyl-L-lysyl-D-alanyl-D-alanine + di-trans,octa-cis-undecaprenyl phosphate = Mur2Ac(oyl-L-Ala-gamma-D-Glu-L-Lys-D-Ala-D-Ala)-di-trans,octa-cis-undecaprenyl diphosphate + UMP. Its pathway is cell wall biogenesis; peptidoglycan biosynthesis. Its function is as follows. Catalyzes the initial step of the lipid cycle reactions in the biosynthesis of the cell wall peptidoglycan: transfers peptidoglycan precursor phospho-MurNAc-pentapeptide from UDP-MurNAc-pentapeptide onto the lipid carrier undecaprenyl phosphate, yielding undecaprenyl-pyrophosphoryl-MurNAc-pentapeptide, known as lipid I. This Streptococcus pneumoniae serotype 19F (strain G54) protein is Phospho-N-acetylmuramoyl-pentapeptide-transferase.